The primary structure comprises 175 residues: Protein her-1 (175 aa).

An N-terminal signal peptide occupies residues 1–18; it reads MRYLPIFVFLGSFGYTET. Residues asparagine 98 and asparagine 163 are each glycosylated (N-linked (GlcNAc...) asparagine).

The protein resides in the secreted. Dictates male development. Probably plays a direct role in cell signaling during C.elegans sex determination. Inhibits the function of tra-2a. This Caenorhabditis elegans protein is Protein her-1 (her-1).